Here is a 435-residue protein sequence, read N- to C-terminus: MPDHLGDDMRKTKKDDTKEEEKNFQALDEGDIAVLKRYGQGPYAEQLKTLDADIENCLKKVNELSGVKESDTGLAPPALWDIAADKQAMQQEQPLQVARCTKIITSDKHDPRYLINVKQFAKFVVDLADSVAPTDIEEGMRVGVDRNKYQIHLPLPAKIDPTVTMMQVEEKPDVTYSDVGGCKDQIEKLREVVETPLLHPERYVNLGIEPPKGVLLYGPPGTGKTLCARAVANRTDACFIRVIGSELVQKYVGEGARMVRELFEMARTKKACLIFFDEIDAVGGARFDDGQGGDNEVQRTMLELINQLDGFDPRGNIKVLMATNRPDTLDPALMRPGRLDRKVEFALPDLAGRAHILKIHAKQMSVERDIRYDLLARLCPNSTGAEIRSVCTEAGMFAIRARRKVATEKDFLEAINKVVKGYAKFSATPRYLTHN.

Basic and acidic residues predominate over residues 1–23 (MPDHLGDDMRKTKKDDTKEEEKN). The interval 1 to 24 (MPDHLGDDMRKTKKDDTKEEEKNF) is disordered. Position 218-225 (218-225 (GPPGTGKT)) interacts with ATP.

This sequence belongs to the AAA ATPase family.

The protein localises to the cytoplasm. Its subcellular location is the nucleus. The 26S proteasome is involved in the ATP-dependent degradation of ubiquitinated proteins. The regulatory (or ATPase) complex confers ATP dependency and substrate specificity to the 26S complex. The sequence is that of 26S proteasome regulatory subunit 7 (rpt-1) from Caenorhabditis elegans.